A 92-amino-acid polypeptide reads, in one-letter code: Plasmid copy control protein CopR (92 aa).

Positions 1-27 (MELAFRESLKKMRGTKSKEKFSQELEM) are enriched in basic and acidic residues. 2 disordered regions span residues 1–40 (MELA…SGKS) and 63–92 (IPNE…NDFV). In terms of domain architecture, HTH cro/C1-type spans 9 to 62 (LKKMRGTKSKEKFSQELEMSRSNYSRIESGKSDPTIKTLEQIVKLTNSTLVVDL). The H-T-H motif DNA-binding region spans 20–39 (KFSQELEMSRSNYSRIESGK).

In terms of biological role, involved in copy control of plasmid pIP501. This is Plasmid copy control protein CopR (copR) from Streptococcus agalactiae.